The chain runs to 230 residues: Prepilin leader peptidase/N-methyltransferase (230 aa).

The next 7 helical transmembrane spans lie at 1 to 21, 60 to 80, 84 to 104, 114 to 134, 140 to 160, 181 to 201, and 208 to 228; these read MIYF…WFYL, GHIL…QIAF, IFTV…YLDW, CLWL…LLTL, SAAS…FYYG, LETL…FSLI, and FLPF…VKYY.

Belongs to the peptidase A24 family.

The protein resides in the cell inner membrane. It catalyses the reaction Typically cleaves a -Gly-|-Phe- bond to release an N-terminal, basic peptide of 5-8 residues from type IV prepilin, and then N-methylates the new N-terminal amino group, the methyl donor being S-adenosyl-L-methionine.. In terms of biological role, plays a role in type II pseudopili formation by proteolytically removing the leader sequence from substrate proteins and subsequently monomethylating the alpha-amino group of the newly exposed N-terminal phenylalanine. Substrates include proteins required for biogenesis of the type II general secretory apparatus. The sequence is that of Prepilin leader peptidase/N-methyltransferase (hofD) from Haemophilus influenzae (strain ATCC 51907 / DSM 11121 / KW20 / Rd).